We begin with the raw amino-acid sequence, 337 residues long: Viral cathepsin (337 aa).

A signal peptide spans 1–18 (MYLIYYYTIIAVATASIA). A propeptide spans 19 to 126 (NEKIFYDIDS…VTVAGPSART (108 aa)) (activation peptide). Disulfide bonds link Cys-147–Cys-188, Cys-181–Cys-221, and Cys-276–Cys-324. The active site involves Cys-150. Catalysis depends on residues His-283 and Asn-303.

The protein belongs to the peptidase C1 family. Synthesized as an inactive proenzyme and activated by proteolytic removal of the inhibitory propeptide.

It catalyses the reaction Endopeptidase of broad specificity, hydrolyzing substrates of both cathepsin L and cathepsin B.. Cysteine protease that plays an essential role in host liquefaction to facilitate horizontal transmission of the virus. May participate in the degradation of foreign protein expressed by the baculovirus system. This Spodoptera litura multicapsid nucleopolyhedrovirus (SpltMNPV) protein is Viral cathepsin (VCATH).